The chain runs to 435 residues: Glutamate-1-semialdehyde 2,1-aminomutase (435 aa).

Lys-266 bears the N6-(pyridoxal phosphate)lysine mark.

The protein belongs to the class-III pyridoxal-phosphate-dependent aminotransferase family. HemL subfamily. In terms of assembly, homodimer. The cofactor is pyridoxal 5'-phosphate.

It is found in the cytoplasm. It catalyses the reaction (S)-4-amino-5-oxopentanoate = 5-aminolevulinate. The protein operates within porphyrin-containing compound metabolism; protoporphyrin-IX biosynthesis; 5-aminolevulinate from L-glutamyl-tRNA(Glu): step 2/2. The chain is Glutamate-1-semialdehyde 2,1-aminomutase from Helicobacter hepaticus (strain ATCC 51449 / 3B1).